A 293-amino-acid chain; its full sequence is 3-methyl-2-oxobutanoate hydroxymethyltransferase (293 aa).

Residues 1-26 form a disordered region; it reads MTQAPVTAGTPYGTIPPASPLPQRRP. 2 residues coordinate Mg(2+): Asp-68 and Asp-111. Residues 68–69, Asp-111, and Lys-140 contribute to the 3-methyl-2-oxobutanoate site; that span reads DS. Position 142 (Glu-142) interacts with Mg(2+). Glu-209 acts as the Proton acceptor in catalysis.

It belongs to the PanB family. Homodecamer; pentamer of dimers. It depends on Mg(2+) as a cofactor.

The protein resides in the cytoplasm. It catalyses the reaction 3-methyl-2-oxobutanoate + (6R)-5,10-methylene-5,6,7,8-tetrahydrofolate + H2O = 2-dehydropantoate + (6S)-5,6,7,8-tetrahydrofolate. The protein operates within cofactor biosynthesis; (R)-pantothenate biosynthesis; (R)-pantoate from 3-methyl-2-oxobutanoate: step 1/2. In terms of biological role, catalyzes the reversible reaction in which hydroxymethyl group from 5,10-methylenetetrahydrofolate is transferred onto alpha-ketoisovalerate to form ketopantoate. This is 3-methyl-2-oxobutanoate hydroxymethyltransferase from Delftia acidovorans (strain DSM 14801 / SPH-1).